The sequence spans 72 residues: Protein LITTLE ZIPPER 4 (72 aa).

Positions 14–44 (YIIKENERLRKKAQILNQENQQLLFELKQKL) form a coiled coil. Positions 42-72 (QKLSKTKNSSGSNQGNNNNNNNLSSSSSASG) are disordered. The segment covering 49–72 (NSSGSNQGNNNNNNNLSSSSSASG) has biased composition (low complexity).

As to quaternary structure, interacts with REV.

Functionally, competitive inhibitor of the HD-ZIPIII transcription factors in shoot apical meristem (SAM) development. Acts by forming non-functional heterodimers. Part of a negative feedback loop. Essential for proper functioning of stem cells in the SAM. The chain is Protein LITTLE ZIPPER 4 from Arabidopsis thaliana (Mouse-ear cress).